Consider the following 59-residue polypeptide: Large ribosomal subunit protein bL35 (59 aa).

Residues 17 to 43 (GQIKRKHAYTSHLAPHKSTKQKRHLRK) are compositionally biased toward basic residues. Residues 17–47 (GQIKRKHAYTSHLAPHKSTKQKRHLRKQATV) are disordered.

This sequence belongs to the bacterial ribosomal protein bL35 family.

This chain is Large ribosomal subunit protein bL35, found in Mycoplasma genitalium (strain ATCC 33530 / DSM 19775 / NCTC 10195 / G37) (Mycoplasmoides genitalium).